Here is a 218-residue protein sequence, read N- to C-terminus: Small ribosomal subunit protein uS5 (218 aa).

Positions 1–49 are disordered; sequence MPGRQRRDGGSGPAGQNGPNTGDNRGGGDRRGGGRDDRRGGQSAEKSNH. Residues 26-49 are compositionally biased toward basic and acidic residues; it reads GGGDRRGGGRDDRRGGQSAEKSNH. Positions 49–112 constitute an S5 DRBM domain; that stretch reads HIERVVTINR…EEARKSFFRV (64 aa).

Belongs to the universal ribosomal protein uS5 family. Part of the 30S ribosomal subunit. Contacts proteins S4 and S8.

In terms of biological role, with S4 and S12 plays an important role in translational accuracy. Functionally, located at the back of the 30S subunit body where it stabilizes the conformation of the head with respect to the body. This is Small ribosomal subunit protein uS5 from Rhodococcus jostii (strain RHA1).